The chain runs to 271 residues: Glutamate racemase (271 aa).

Substrate contacts are provided by residues 12–13 and 44–45; these read DS and YG. Catalysis depends on C75, which acts as the Proton donor/acceptor. 76–77 lines the substrate pocket; the sequence is NS. C185 (proton donor/acceptor) is an active-site residue. A substrate-binding site is contributed by 186–187; it reads TH.

Belongs to the aspartate/glutamate racemases family.

The enzyme catalyses L-glutamate = D-glutamate. It participates in cell wall biogenesis; peptidoglycan biosynthesis. Provides the (R)-glutamate required for cell wall biosynthesis. This is Glutamate racemase from Mycobacterium bovis (strain ATCC BAA-935 / AF2122/97).